The chain runs to 120 residues: Large ribosomal subunit protein bL17 (120 aa).

It belongs to the bacterial ribosomal protein bL17 family. Part of the 50S ribosomal subunit. Contacts protein L32.

In Bacillus cereus (strain ATCC 14579 / DSM 31 / CCUG 7414 / JCM 2152 / NBRC 15305 / NCIMB 9373 / NCTC 2599 / NRRL B-3711), this protein is Large ribosomal subunit protein bL17.